A 156-amino-acid chain; its full sequence is Low molecular weight protein-tyrosine-phosphatase YfkJ (156 aa).

The active-site Nucleophile is the C8. R14 is an active-site residue. D125 serves as the catalytic Proton donor.

The protein belongs to the low molecular weight phosphotyrosine protein phosphatase family.

The enzyme catalyses O-phospho-L-tyrosyl-[protein] + H2O = L-tyrosyl-[protein] + phosphate. With respect to regulation, efficiently inhibited by Cu(2+) ion, Zn(2+) ion and N-ethylmaleimide, while the addition of Mg(2+), Ca(2+) or Fe(3+) ions has minimal effect. Inhibited in a competitive manner by vanadate. Dephosphorylates the phosphotyrosine-containing proteins. Involved in ethanol stress resistance. The protein is Low molecular weight protein-tyrosine-phosphatase YfkJ (yfkJ) of Bacillus subtilis (strain 168).